Consider the following 285-residue polypeptide: Protein pxr1 (285 aa).

The span at 1 to 11 shows a compositional bias: basic residues; it reads MGLAAPRKKIK. A disordered region spans residues 1–23; sequence MGLAAPRKKIKISHDPNNTNWSR. A G-patch domain is found at 25 to 79; the sequence is TSGFGHKILSSQGWTPGSFLGARNAAHAEMFTAASASHIKVVLKDDTLGLGARPK. The interval 144–263 is disordered; the sequence is TPIVTEEPQG…MGRHVFRGRH (120 aa). Positions 152–163 are enriched in basic and acidic residues; the sequence is QGIHKDKQEDKL. A compositionally biased stretch (basic residues) spans 190–208; it reads KKKKSKSKNHREKKDRKRK. The span at 224 to 234 shows a compositional bias: basic and acidic residues; the sequence is RSTEKKSKATR. A compositionally biased stretch (basic residues) spans 254–263; sequence MGRHVFRGRH.

Belongs to the PINX1 family.

It is found in the nucleus. The protein resides in the nucleolus. In terms of biological role, involved in rRNA-processing at A0, A1 and A2 sites and negatively regulates telomerase. The protein is Protein pxr1 (pxr1) of Aspergillus niger (strain ATCC MYA-4892 / CBS 513.88 / FGSC A1513).